The primary structure comprises 299 residues: GTPase Era (299 aa).

The Era-type G domain maps to R9–E177. Residues G17–S24 form a G1 region. G17–S24 lines the GTP pocket. Residues Q43 to H47 are G2. A G3 region spans residues D64–G67. GTP-binding positions include D64–L68 and N126–D129. The interval N126–D129 is G4. The tract at residues V156–A158 is G5. Positions V200–E284 constitute a KH type-2 domain.

It belongs to the TRAFAC class TrmE-Era-EngA-EngB-Septin-like GTPase superfamily. Era GTPase family. As to quaternary structure, monomer.

Its subcellular location is the cytoplasm. The protein resides in the cell inner membrane. In terms of biological role, an essential GTPase that binds both GDP and GTP, with rapid nucleotide exchange. Plays a role in 16S rRNA processing and 30S ribosomal subunit biogenesis and possibly also in cell cycle regulation and energy metabolism. This Xanthomonas axonopodis pv. citri (strain 306) protein is GTPase Era.